The following is a 252-amino-acid chain: Adenosylcobinamide-GDP ribazoletransferase (252 aa).

7 helical membrane passes run 4 to 24 (LLLLNLLASIIFYTSIPLPYI), 35 to 55 (LVPMVGLIIGVILGLLDGGMN), 65 to 85 (SALVVALWIFITGGLHLDGAM), 102 to 122 (VMADSATGAFGAMSAIAILLL), 178 to 198 (LLPGLCLMVAVSSLFWLVNNH), 201 to 221 (LITVVGLITGSAIASLTAAWF), and 232 to 252 (TYGAVVEWTEALFLCVLTILT).

This sequence belongs to the CobS family. The cofactor is Mg(2+).

Its subcellular location is the cell inner membrane. The catalysed reaction is alpha-ribazole + adenosylcob(III)inamide-GDP = adenosylcob(III)alamin + GMP + H(+). It catalyses the reaction alpha-ribazole 5'-phosphate + adenosylcob(III)inamide-GDP = adenosylcob(III)alamin 5'-phosphate + GMP + H(+). Its pathway is cofactor biosynthesis; adenosylcobalamin biosynthesis; adenosylcobalamin from cob(II)yrinate a,c-diamide: step 7/7. Its function is as follows. Joins adenosylcobinamide-GDP and alpha-ribazole to generate adenosylcobalamin (Ado-cobalamin). Also synthesizes adenosylcobalamin 5'-phosphate from adenosylcobinamide-GDP and alpha-ribazole 5'-phosphate. In Trichormus variabilis (strain ATCC 29413 / PCC 7937) (Anabaena variabilis), this protein is Adenosylcobinamide-GDP ribazoletransferase.